Here is a 75-residue protein sequence, read N- to C-terminus: DNA-directed RNA polymerase subunit omega (75 aa).

This sequence belongs to the RNA polymerase subunit omega family. In cyanobacteria the RNAP catalytic core is composed of 2 alpha, 1 beta, 1 beta', 1 gamma and 1 omega subunit. When a sigma factor is associated with the core the holoenzyme is formed, which can initiate transcription.

The catalysed reaction is RNA(n) + a ribonucleoside 5'-triphosphate = RNA(n+1) + diphosphate. Promotes RNA polymerase assembly. Latches the N- and C-terminal regions of the beta' subunit thereby facilitating its interaction with the beta and alpha subunits. In Prochlorococcus marinus (strain MIT 9313), this protein is DNA-directed RNA polymerase subunit omega.